The chain runs to 619 residues: Keratin, type II cytoskeletal 1 (619 aa).

Residues 1–180 (MSRHFSSRSG…DPEIQKVKTR (180 aa)) form a head region. The residue at position 12 (Arg12) is an Omega-N-methylarginine. A phosphoserine mark is found at Ser18 and Ser21. The tract at residues 28–49 (QRRTTSSSVRHSGGGGGRFSGG) is disordered. A compositionally biased stretch (gly residues) spans 39–49 (SGGGGGRFSGG). At Arg45 the chain carries Omega-N-methylarginine. Ser68 carries the post-translational modification Phosphoserine. Residues 173 to 477 (EIQKVKTRER…ELMNTKLALD (305 aa)) adopt a coiled-coil conformation. The interval 181–216 (EREQIKSLNNQFASFIDKVRFLEQQNQVLQTKWELL) is coil 1A. An IF rod domain is found at 181-494 (EREQIKSLNN…TLLEGEESRM (314 aa)). Residues 217–235 (QQVDTSTRTHSLEPYFENY) form a linker 1 region. Residues 236 to 327 (ISNLRRRVDQ…TLYQAELSQM (92 aa)) are coil 1B. Residue Lys277 is modified to N6,N6-dimethyllysine. The interval 328–351 (QTQISETNVILSMDNNRSLDLDSI) is linker 12. Ser345 is subject to Phosphoserine. The coil 2 stretch occupies residues 352–490 (ISEVKAQYEE…ATYRTLLEGE (139 aa)). Residues 491 to 619 (ESRMSGECAP…VSTSYSRAVR (129 aa)) form a tail region. Omega-N-methylarginine is present on residues Arg519 and Arg575. The disordered stretch occupies residues 559 to 619 (GGGGGGYGSS…VSTSYSRAVR (61 aa)). Positions 573–595 (GHRGGSGGGSRSGGSSGGRGSSS) are enriched in gly residues. Over residues 596-606 (GGIKTSSGSSS) the composition is skewed to low complexity. The span at 607–619 (VKFVSTSYSRAVR) shows a compositional bias: polar residues.

Belongs to the intermediate filament family. In terms of assembly, heterotetramer of two type I and two type II keratins. Heterodimer with KRT10. Two heterodimers of KRT1 and KRT10 form a heterotetramer. Forms a heterodimer with KRT14; the interaction is more abundant in the absence of KRT5. Interacts with ITGB1 in the presence of RACK1 and SRC, and with RACK1. Interacts with C1QBP; the association represents a cell surface kininogen receptor. Interacts with EPPK1; interaction is dependent of higher-order structure of intermediate filament. Post-translationally, undergoes deimination of some arginine residues (citrullination).

It localises to the cell membrane. The protein localises to the cytoplasm. May regulate the activity of kinases such as PKC and SRC via binding to integrin beta-1 (ITB1) and the receptor of activated protein C kinase 1 (RACK1). In complex with C1QBP is a high affinity receptor for kininogen-1/HMWK. This chain is Keratin, type II cytoskeletal 1, found in Canis lupus familiaris (Dog).